The sequence spans 384 residues: Galactokinase (384 aa).

Substrate is bound at residue 34–37 (EHTD). Residue 123-129 (SSGLSSS) coordinates ATP. 2 residues coordinate Mg(2+): Ser-129 and Glu-161. Asp-173 (proton acceptor) is an active-site residue. Substrate is bound at residue Tyr-222.

Belongs to the GHMP kinase family. GalK subfamily.

It localises to the cytoplasm. It carries out the reaction alpha-D-galactose + ATP = alpha-D-galactose 1-phosphate + ADP + H(+). It participates in carbohydrate metabolism; galactose metabolism. Catalyzes the transfer of the gamma-phosphate of ATP to D-galactose to form alpha-D-galactose-1-phosphate (Gal-1-P). This Actinobacillus pleuropneumoniae serotype 3 (strain JL03) protein is Galactokinase.